The primary structure comprises 140 residues: Small ribosomal subunit protein uS19 (140 aa).

Belongs to the universal ribosomal protein uS19 family.

Its function is as follows. Protein S19 forms a complex with S13 that binds strongly to the 16S ribosomal RNA. In Sulfurisphaera tokodaii (strain DSM 16993 / JCM 10545 / NBRC 100140 / 7) (Sulfolobus tokodaii), this protein is Small ribosomal subunit protein uS19 (rps19).